Reading from the N-terminus, the 286-residue chain is General stress protein 39 (286 aa).

Residues 1–26 (MANYPKELPAQTQSRQPGIESEMNPS) form a disordered region. NAD(+) is bound at residue 46 to 70 (LITGGDSGIGRAVSVAYAKEGADIA). Residue Ser178 coordinates substrate. Tyr191 (proton acceptor) is an active-site residue.

Belongs to the short-chain dehydrogenases/reductases (SDR) family.

This is General stress protein 39 (ydaD) from Bacillus subtilis (strain 168).